Here is a 395-residue protein sequence, read N- to C-terminus: Zinc finger protein 200 (395 aa).

Residues 157-208 form a disordered region; that stretch reads VNGSNPEGEDPEREPVENEDYREKSSDDDEMDSSLVSQQPPDNQEKERLNTS. A compositionally biased stretch (basic and acidic residues) spans 169 to 181; it reads REPVENEDYREKS. The interval 246-395 is interaction with PRMT3; sequence RRTRRWYTCP…HSACKTRKQK (150 aa). 5 consecutive C2H2-type zinc fingers follow at residues 252–274, 280–302, 308–330, 336–358, and 364–386; these read YTCP…QRTH, YDCN…ERIH, YSCS…EGIH, FKCP…LQSH, and YGCK…EKTH.

Interacts (via C-terminus) with PRMT3 (via zinc-finger); the interaction is direct and required to localize protein arginine N-methyltransferase PRMT3 to the nucleus and inhibit its proteasomal degradation. In terms of tissue distribution, highly expressed in testis, weakly expressed in spleen, thymus, prostate, ovary, small intestine colon and peripheral blood leukocytes.

It is found in the nucleus. Localizes protein arginine N-methyltransferase PRMT3 to the nucleus. The chain is Zinc finger protein 200 (ZNF200) from Homo sapiens (Human).